Consider the following 188-residue polypeptide: MSRIILSLDAENADLKARVAFLEQQLFGPKSEKMTAIDPTQATLDLGDLTDIPAAANDDVAPVAEGPKQERRSPSRNIGRLPRHLPRYEELIEPESKICPCCSFELHCVGTDVSEALDIVPAVVRVKQTIRPSYACRAGESVIVQAPASARVMGESNVAPMRLAFCLAHARRKFVDVVKLTGSSEAGR.

The segment at asparagine 57–arginine 80 is disordered.

The protein belongs to the transposase 25 family.

This is an uncharacterized protein from Sinorhizobium fredii (strain NBRC 101917 / NGR234).